Reading from the N-terminus, the 182-residue chain is Orotate phosphoribosyltransferase (182 aa).

Residues Arg96, Lys97, Lys100, His102, and Glu122 to Ser130 contribute to the 5-phospho-alpha-D-ribose 1-diphosphate site. Thr126 and Arg154 together coordinate orotate.

This sequence belongs to the purine/pyrimidine phosphoribosyltransferase family. PyrE subfamily. As to quaternary structure, homodimer. Mg(2+) is required as a cofactor.

It catalyses the reaction orotidine 5'-phosphate + diphosphate = orotate + 5-phospho-alpha-D-ribose 1-diphosphate. It functions in the pathway pyrimidine metabolism; UMP biosynthesis via de novo pathway; UMP from orotate: step 1/2. Functionally, catalyzes the transfer of a ribosyl phosphate group from 5-phosphoribose 1-diphosphate to orotate, leading to the formation of orotidine monophosphate (OMP). The chain is Orotate phosphoribosyltransferase from Streptomyces avermitilis (strain ATCC 31267 / DSM 46492 / JCM 5070 / NBRC 14893 / NCIMB 12804 / NRRL 8165 / MA-4680).